The sequence spans 86 residues: Exodeoxyribonuclease 7 small subunit (86 aa).

The tract at residues 1–26 (MQDELFETEKAPQKNAKNAKNAPKKS) is disordered.

It belongs to the XseB family. Heterooligomer composed of large and small subunits.

The protein localises to the cytoplasm. The enzyme catalyses Exonucleolytic cleavage in either 5'- to 3'- or 3'- to 5'-direction to yield nucleoside 5'-phosphates.. In terms of biological role, bidirectionally degrades single-stranded DNA into large acid-insoluble oligonucleotides, which are then degraded further into small acid-soluble oligonucleotides. The sequence is that of Exodeoxyribonuclease 7 small subunit from Helicobacter pylori (strain J99 / ATCC 700824) (Campylobacter pylori J99).